We begin with the raw amino-acid sequence, 592 residues long: Inactive glycosyltransferase 25 family member 3 (592 aa).

The signal sequence occupies residues 1 to 19 (MHVARLLPLLLLLGQQLRA). 4 N-linked (GlcNAc...) asparagine glycosylation sites follow: N72, N150, N234, and N357. Positions 540 to 592 (AEWLSDTETSSPWDDDSGRLISQTGSQKALRGPHLHLTGSSGHSLHPHHRDEL) are disordered. Positions 589–592 (RDEL) match the Prevents secretion from ER motif.

It belongs to the glycosyltransferase 25 family.

It is found in the endoplasmic reticulum lumen. In terms of biological role, probable cell adhesion protein involved in leukocyte transmigration across the blood-brain barrier. Does not express any beta-galactosyltransferase activity in vitro. This chain is Inactive glycosyltransferase 25 family member 3 (Cercam), found in Mus musculus (Mouse).